A 358-amino-acid chain; its full sequence is Homer protein homolog 3 (358 aa).

The required for interaction with NFATC2 stretch occupies residues 1-80 (MSTAREQPIF…TKTSQKFGQW (80 aa)). Residues 1–113 (MSTAREQPIF…EKFQEVKEAA (113 aa)) form the WH1 domain. Positions 95–122 (SEQQLTQFAEKFQEVKEAARLAREKSQD) form a coiled coil. 2 positions are modified to phosphoserine: serine 120 and serine 158. Disordered stretches follow at residues 137 to 168 (QVPPSPLVSTNGPEEKLFRSQSADAPGPTERE) and 239 to 296 (AEPV…QVQD). The stretch at 190-355 (ALQDSNQRLA…LREGLARLAE (166 aa)) forms a coiled coil. Over residues 257–267 (LEARVQTKDQE) the composition is skewed to basic and acidic residues. Over residues 268–277 (IQTLKNQSTG) the composition is skewed to polar residues. Over residues 280 to 290 (EAPDTAEREET) the composition is skewed to basic and acidic residues.

This sequence belongs to the Homer family. Tetramer. Encodes coiled-coil structures that mediate homo- and heteromultimerization. Interacts with NFATC2; interaction is calcium independent; interaction competes with PPP3CA for NFATC2 binding; interaction is reduced by AKT activation. Interacts with NFATC1 and NFATC4. Interacts with SHANK1; forms a high-order complex at least composed of SHANK1 and HOMER3; the complex formation is regulated by CAMK2A-mediated phosphorylation.

The protein resides in the cytoplasm. It localises to the postsynaptic density. Its subcellular location is the synapse. In terms of biological role, postsynaptic density scaffolding protein. Binds and cross-links cytoplasmic regions of GRM1, GRM5, ITPR1, DNM3, RYR1, RYR2, SHANK1 and SHANK3. By physically linking GRM1 and GRM5 with ER-associated ITPR1 receptors, it aids the coupling of surface receptors to intracellular calcium release. Negatively regulates T cell activation by inhibiting the calcineurin-NFAT pathway. Acts by competing with calcineurin/PPP3CA for NFAT protein binding, hence preventing NFAT activation by PPP3CA. The sequence is that of Homer protein homolog 3 from Rattus norvegicus (Rat).